The primary structure comprises 1057 residues: Carbamoyl phosphate synthase large chain (1057 aa).

A carboxyphosphate synthetic domain region spans residues 1–401; that stretch reads MPKRQDIETI…SLLKAIRSLE (401 aa). The ATP site is built by Arg-129, Arg-169, Gly-175, Gly-176, Lys-208, Ile-210, Glu-215, Gly-241, Ile-242, His-243, Gln-284, and Glu-298. Positions 133-327 constitute an ATP-grasp 1 domain; sequence RTLMNDLGVP…IAKLAAKIAI (195 aa). Positions 284, 298, and 300 each coordinate Mg(2+). Residues Gln-284, Glu-298, and Asn-300 each contribute to the Mn(2+) site. Residues 402 to 546 form an oligomerization domain region; sequence YGVHHLGLPN…YGTYEYENES (145 aa). The interval 547-929 is carbamoyl phosphate synthetic domain; that stretch reads VVTEKEKILV…ALFKGLTASG (383 aa). The region spanning 671-861 is the ATP-grasp 2 domain; sequence EALLHTIDVP…MAQLAMRAII (191 aa). 10 residues coordinate ATP: Arg-707, Arg-746, Leu-748, Glu-752, Gly-777, Val-778, His-779, Ser-780, Gln-820, and Glu-832. Positions 820, 832, and 834 each coordinate Mg(2+). The Mn(2+) site is built by Gln-820, Glu-832, and Asn-834. Residues 930–1057 form the MGS-like domain; it reads MEVKDHGTVL…ESMTFTMKNM (128 aa). An allosteric domain region spans residues 930–1057; it reads MEVKDHGTVL…ESMTFTMKNM (128 aa).

Belongs to the CarB family. In terms of assembly, composed of two chains; the small (or glutamine) chain promotes the hydrolysis of glutamine to ammonia, which is used by the large (or ammonia) chain to synthesize carbamoyl phosphate. Tetramer of heterodimers (alpha,beta)4. Requires Mg(2+) as cofactor. Mn(2+) serves as cofactor.

It carries out the reaction hydrogencarbonate + L-glutamine + 2 ATP + H2O = carbamoyl phosphate + L-glutamate + 2 ADP + phosphate + 2 H(+). The catalysed reaction is hydrogencarbonate + NH4(+) + 2 ATP = carbamoyl phosphate + 2 ADP + phosphate + 2 H(+). The protein operates within amino-acid biosynthesis; L-arginine biosynthesis; carbamoyl phosphate from bicarbonate: step 1/1. Its pathway is pyrimidine metabolism; UMP biosynthesis via de novo pathway; (S)-dihydroorotate from bicarbonate: step 1/3. Functionally, large subunit of the glutamine-dependent carbamoyl phosphate synthetase (CPSase). CPSase catalyzes the formation of carbamoyl phosphate from the ammonia moiety of glutamine, carbonate, and phosphate donated by ATP, constituting the first step of 2 biosynthetic pathways, one leading to arginine and/or urea and the other to pyrimidine nucleotides. The large subunit (synthetase) binds the substrates ammonia (free or transferred from glutamine from the small subunit), hydrogencarbonate and ATP and carries out an ATP-coupled ligase reaction, activating hydrogencarbonate by forming carboxy phosphate which reacts with ammonia to form carbamoyl phosphate. In Staphylococcus saprophyticus subsp. saprophyticus (strain ATCC 15305 / DSM 20229 / NCIMB 8711 / NCTC 7292 / S-41), this protein is Carbamoyl phosphate synthase large chain.